The primary structure comprises 521 residues: GMC-type oxidoreductase acuG (521 aa).

FAD is bound by residues 14-15 (TV), 34-35 (EA), L82, 90-93 (NYGL), A492, and 503-504 (YQ).

It belongs to the GMC oxidoreductase family. FAD serves as cofactor.

It participates in secondary metabolite biosynthesis. Its function is as follows. GMC-type oxidoreductase; part of the gene cluster that mediates the biosynthesis of aculins. The pathway begins with the synthesis of 6-methylsalicylic acid by the polyketide synthase (PKS) acuA via condensation of acetate and malonate units. The 6-methylsalicylic acid decarboxylase acuB then catalyzes the decarboxylation of 6-methylsalicylic acid to yield m-cresol (also known as 3-methylphenol). These first reactions occur in the cytosol. The intermediate m-cresol is then transported into the endoplasmic reticulum where the cytochrome P450 monooxygenase acuC converts it to m-hydroxybenzyl alcohol, which is further converted to gentisyl alcohol by the cytochrome P450 monooxygenase acuD. Gentisyl alcohol is further oxidized by the oxidoreductase acuE that probably catalyzes hydroxylation of the aromatic ring. The aromatic system might then be opened by oxidation through a Baeyer-Villiger type of oxidation, which could be catalyzed by acuF, with the carboxylic acid at C-1 subsequently reduced to an aldehyde by acuG. Subsequently, a hemiacetal is formed, before the dehydrogenase acuH would reduce the double bond between C-4 and C-6. Finally, keto-enol tautomerism results in formation of aculinic acid, which exists as two diastereomers (both R/S configurations at C-1) by non-enzymatic hemiacetal formation. The carboxypeptidase acuI could be involved in the linking of aculinic acid to an aculene A moiety produced by the aculene biosynthesis cluster and which leads to the production of aculin A. AcuI may also be involved in the attachment of proline to aculinic acid to form epi-aculins A and B. This Aspergillus aculeatus (strain ATCC 16872 / CBS 172.66 / WB 5094) protein is GMC-type oxidoreductase acuG.